We begin with the raw amino-acid sequence, 163 residues long: Nucleotide-binding protein RER_17110 (163 aa).

Belongs to the YajQ family.

Nucleotide-binding protein. The sequence is that of Nucleotide-binding protein RER_17110 from Rhodococcus erythropolis (strain PR4 / NBRC 100887).